A 387-amino-acid polypeptide reads, in one-letter code: Alpha-maltose-1-phosphate synthase (387 aa).

It belongs to the glycosyltransferase group 1 family.

It catalyses the reaction ADP-alpha-D-glucose + alpha-D-glucose 1-phosphate = alpha-maltose 1-phosphate + ADP + H(+). Its pathway is capsule biogenesis; capsule polysaccharide biosynthesis. It functions in the pathway glycan biosynthesis; glycogen biosynthesis. Its function is as follows. Involved in the biosynthesis of the maltose-1-phosphate (M1P) building block required for alpha-glucan production by the key enzyme GlgE. Catalyzes the formation of an alpha-1,4 linkage between glucose from ADP-glucose and glucose 1-phosphate (G1P) to yield maltose-1-phosphate (M1P). The chain is Alpha-maltose-1-phosphate synthase from Mycobacterium tuberculosis (strain CDC 1551 / Oshkosh).